The chain runs to 77 residues: Cysteine-rich protein 1 (77 aa).

The region spanning 2-63 (PKCPKCDKEV…HPCYSAMFGP (62 aa)) is the LIM zinc-binding domain. An N6-acetyllysine mark is found at Lys9 and Lys22. At Arg68 the chain carries Omega-N-methylarginine.

In terms of biological role, seems to have a role in zinc absorption and may function as an intracellular zinc transport protein. This is Cysteine-rich protein 1 (Crip1) from Mus musculus (Mouse).